The chain runs to 284 residues: MNRLQLYFRLIRLHKPIGILLLLWPTLWALWMASDGKPDWTLVAIFTLGTVLMRSAGCAVNDYADRDFDKHVQRTVDRPITSGKIKPYEALLVALVLTLLAFALIWPLNTLTKQLSIAAVIIAATYPYFKRFFAIPQAYLGIAFGFGIPMGFAAVQNTVPAAAWWLLVANVFWSVAYDTEYAMVDREDDLKLGMKTSAITFGRYDVAIIMFCYAMTLGIIGIVGWQFGLRIWFVAGLLLAAVCAAYHYTLIRSRERAGCFAAFNHNNWLGGAIFGGVALDYLLR.

8 helical membrane-spanning segments follow: residues 16 to 36 (PIGI…ASDG), 40 to 60 (WTLV…GCAV), 91 to 111 (LLVA…LNTL), 132 to 152 (FFAI…PMGF), 157 to 177 (NTVP…SVAY), 207 to 227 (AIIM…GWQF), 231 to 251 (IWFV…YTLI), and 259 to 279 (CFAA…GVAL).

The protein belongs to the UbiA prenyltransferase family. The cofactor is Mg(2+).

The protein localises to the cell inner membrane. It catalyses the reaction all-trans-octaprenyl diphosphate + 4-hydroxybenzoate = 4-hydroxy-3-(all-trans-octaprenyl)benzoate + diphosphate. It functions in the pathway cofactor biosynthesis; ubiquinone biosynthesis. Functionally, catalyzes the prenylation of para-hydroxybenzoate (PHB) with an all-trans polyprenyl group. Mediates the second step in the final reaction sequence of ubiquinone-8 (UQ-8) biosynthesis, which is the condensation of the polyisoprenoid side chain with PHB, generating the first membrane-bound Q intermediate 3-octaprenyl-4-hydroxybenzoate. This chain is 4-hydroxybenzoate octaprenyltransferase, found in Janthinobacterium sp. (strain Marseille) (Minibacterium massiliensis).